We begin with the raw amino-acid sequence, 287 residues long: Nucleotide-binding protein Hhal_2130 (287 aa).

11 to 18 contributes to the ATP binding site; it reads GLSGSGKS. A GTP-binding site is contributed by 63 to 66; sequence DARN.

It belongs to the RapZ-like family.

Functionally, displays ATPase and GTPase activities. This is Nucleotide-binding protein Hhal_2130 from Halorhodospira halophila (strain DSM 244 / SL1) (Ectothiorhodospira halophila (strain DSM 244 / SL1)).